Consider the following 117-residue polypeptide: Ig heavy chain V region 108A (117 aa).

The N-terminal stretch at 1 to 19 is a signal peptide; that stretch reads MGWSWIFLFLLSGTAGVHS. In terms of domain architecture, Ig-like spans 20–117; the sequence is EVQLQQSGPE…EDSAVYYCAR (98 aa).

The chain is Ig heavy chain V region 108A (Igh-VJ558) from Mus musculus (Mouse).